We begin with the raw amino-acid sequence, 553 residues long: MPHFNPVPVSNKKFVFDDFILNMDGSLLRSEKKVNIPPKEYAVLVILLEAAGEIVSKNTLLDQVWGDAEVNEESLTRCIYALRRILSEDKEHRYIETLYGQGYRFNRPVVVVSPPAPQPTTHTLAILPFQMQDQVQSESLHYSIVKGLSQYAPFGLSVLPVTITKNCRSVKDILELMDQLRPDYYISGQMIPDGNDNIVQIEIVRVKGYHLLHQESIKLIEHQPASLLQNKIANLLLRCIPGLRWDTKQISELNSIDSTMVYLRGKHELNQYTPYSLQQALKLLTQCVNMSPNSIAPYCALAECYLSMTQMGIFDKQNAMIKAKEHAIKATELDHNNPQALGLLGLINTIHSEYIVGSLLFKQANLLSPISADIKYYYGWNLFMAGQLEEALQTINECLKLDPTRAAAGITKLWITYYHTGIDDAIRLGDELRSQHLQDNPILLSMQVMFLSLKGKHELARKLTKEISTQEITGLIAVNLLYAEYCQNSERALPTIREFLESEQRIDNNPGLLPLVLVAHGEAIAEKMWNKFKNEDNIWFKRWKQDPRLIKLR.

The ompR/PhoB-type DNA-binding region spans 11–107; that stretch reads NKKFVFDDFI…LYGQGYRFNR (97 aa). D62 is modified (4-aspartylphosphate). The stretch at 372-405 is one TPR repeat; it reads ADIKYYYGWNLFMAGQLEEALQTINECLKLDPTR.

Its function is as follows. The main transcriptional regulator of the Salmonella pathogenicity island 1 (SPI1) gene expression. Activates the expression of invasion genes by a direct action at their promoters and also indirectly by increasing the level of invF. Also binds upstream of prgH and directly activates the expression of prgHIJK operon. The chain is Transcriptional regulator HilA (hilA) from Salmonella paratyphi A (strain ATCC 9150 / SARB42).